Reading from the N-terminus, the 181-residue chain is Adenine phosphoribosyltransferase 1 (181 aa).

This sequence belongs to the purine/pyrimidine phosphoribosyltransferase family. As to quaternary structure, homodimer.

The protein resides in the cytoplasm. The enzyme catalyses AMP + diphosphate = 5-phospho-alpha-D-ribose 1-diphosphate + adenine. The protein operates within purine metabolism; AMP biosynthesis via salvage pathway; AMP from adenine: step 1/1. In terms of biological role, catalyzes a salvage reaction resulting in the formation of AMP, that is energically less costly than de novo synthesis. The polypeptide is Adenine phosphoribosyltransferase 1 (APT1) (Triticum aestivum (Wheat)).